The sequence spans 159 residues: Ribosomal RNA large subunit methyltransferase H (159 aa).

S-adenosyl-L-methionine contacts are provided by residues Leu76, Gly108, and 127-132; that span reads FGLLTL.

It belongs to the RNA methyltransferase RlmH family. As to quaternary structure, homodimer.

Its subcellular location is the cytoplasm. The enzyme catalyses pseudouridine(1915) in 23S rRNA + S-adenosyl-L-methionine = N(3)-methylpseudouridine(1915) in 23S rRNA + S-adenosyl-L-homocysteine + H(+). In terms of biological role, specifically methylates the pseudouridine at position 1915 (m3Psi1915) in 23S rRNA. The polypeptide is Ribosomal RNA large subunit methyltransferase H (Leuconostoc mesenteroides subsp. mesenteroides (strain ATCC 8293 / DSM 20343 / BCRC 11652 / CCM 1803 / JCM 6124 / NCDO 523 / NBRC 100496 / NCIMB 8023 / NCTC 12954 / NRRL B-1118 / 37Y)).